A 342-amino-acid polypeptide reads, in one-letter code: tRNA N6-adenosine threonylcarbamoyltransferase (342 aa).

Fe cation is bound by residues His-111 and His-115. Residues 134–138 (LVSGG), Asp-167, Gly-180, and Asn-272 contribute to the substrate site. Residue Asp-300 coordinates Fe cation.

This sequence belongs to the KAE1 / TsaD family. It depends on Fe(2+) as a cofactor.

It localises to the cytoplasm. The enzyme catalyses L-threonylcarbamoyladenylate + adenosine(37) in tRNA = N(6)-L-threonylcarbamoyladenosine(37) in tRNA + AMP + H(+). Required for the formation of a threonylcarbamoyl group on adenosine at position 37 (t(6)A37) in tRNAs that read codons beginning with adenine. Is involved in the transfer of the threonylcarbamoyl moiety of threonylcarbamoyl-AMP (TC-AMP) to the N6 group of A37, together with TsaE and TsaB. TsaD likely plays a direct catalytic role in this reaction. The sequence is that of tRNA N6-adenosine threonylcarbamoyltransferase from Aromatoleum aromaticum (strain DSM 19018 / LMG 30748 / EbN1) (Azoarcus sp. (strain EbN1)).